The sequence spans 97 residues: Aspartyl/glutamyl-tRNA(Asn/Gln) amidotransferase subunit C (97 aa).

It belongs to the GatC family. As to quaternary structure, heterotrimer of A, B and C subunits.

The catalysed reaction is L-glutamyl-tRNA(Gln) + L-glutamine + ATP + H2O = L-glutaminyl-tRNA(Gln) + L-glutamate + ADP + phosphate + H(+). It catalyses the reaction L-aspartyl-tRNA(Asn) + L-glutamine + ATP + H2O = L-asparaginyl-tRNA(Asn) + L-glutamate + ADP + phosphate + 2 H(+). In terms of biological role, allows the formation of correctly charged Asn-tRNA(Asn) or Gln-tRNA(Gln) through the transamidation of misacylated Asp-tRNA(Asn) or Glu-tRNA(Gln) in organisms which lack either or both of asparaginyl-tRNA or glutaminyl-tRNA synthetases. The reaction takes place in the presence of glutamine and ATP through an activated phospho-Asp-tRNA(Asn) or phospho-Glu-tRNA(Gln). The chain is Aspartyl/glutamyl-tRNA(Asn/Gln) amidotransferase subunit C from Synechococcus sp. (strain JA-3-3Ab) (Cyanobacteria bacterium Yellowstone A-Prime).